Reading from the N-terminus, the 703-residue chain is Polyribonucleotide nucleotidyltransferase (703 aa).

Mg(2+)-binding residues include D486 and D492. A KH domain is found at 553-612; it reads PKIEIIHINPDKIRDVIGPGGKKINEIIDATGVKLDIEQDGTVFIGSSDASMIEAAKKLI. Residues 622-690 form the S1 motif domain; the sequence is GQIYMATVKR…KQGRVNASRK (69 aa).

It belongs to the polyribonucleotide nucleotidyltransferase family. Mg(2+) is required as a cofactor.

Its subcellular location is the cytoplasm. The catalysed reaction is RNA(n+1) + phosphate = RNA(n) + a ribonucleoside 5'-diphosphate. Functionally, involved in mRNA degradation. Catalyzes the phosphorolysis of single-stranded polyribonucleotides processively in the 3'- to 5'-direction. This chain is Polyribonucleotide nucleotidyltransferase, found in Macrococcus caseolyticus (strain JCSC5402) (Macrococcoides caseolyticum).